We begin with the raw amino-acid sequence, 124 residues long: Small ribosomal subunit protein uS12 (124 aa).

At D89 the chain carries 3-methylthioaspartic acid. The disordered stretch occupies residues 105-124; sequence QGVKNRKQARSRYGAKKEKS. The segment covering 108-118 has biased composition (basic residues); it reads KNRKQARSRYG.

It belongs to the universal ribosomal protein uS12 family. In terms of assembly, part of the 30S ribosomal subunit. Contacts proteins S8 and S17. May interact with IF1 in the 30S initiation complex.

Its function is as follows. With S4 and S5 plays an important role in translational accuracy. Functionally, interacts with and stabilizes bases of the 16S rRNA that are involved in tRNA selection in the A site and with the mRNA backbone. Located at the interface of the 30S and 50S subunits, it traverses the body of the 30S subunit contacting proteins on the other side and probably holding the rRNA structure together. The combined cluster of proteins S8, S12 and S17 appears to hold together the shoulder and platform of the 30S subunit. In Mycobacterium sp. (strain JLS), this protein is Small ribosomal subunit protein uS12.